A 196-amino-acid chain; its full sequence is C-type lectin domain family 3 member A (196 aa).

A signal peptide spans 1–22 (MAKNGLVLCILVVSLLLDQTDG). 3 disulfides stabilise this stretch: Cys68-Cys78, Cys95-Cys191, and Cys167-Cys183. Residues 74-192 (VHKKCYLASE…CRSSKRYICE (119 aa)) enclose the C-type lectin domain.

It localises to the secreted. Its function is as follows. Promotes cell adhesion to laminin and fibronectin. The sequence is that of C-type lectin domain family 3 member A (Clec3a) from Mus musculus (Mouse).